Reading from the N-terminus, the 825-residue chain is Ent-copalyl diphosphate synthase 2, chloroplastic (825 aa).

The N-terminal 70 residues, 1 to 70, are a transit peptide targeting the chloroplast; it reads MVLSSSCTTV…KGSSLTPIVR (70 aa). Lys-241 contributes to the substrate binding site. Residues 373-376 carry the DXDD motif motif; that stretch reads EVDD. Position 459 (Lys-459) interacts with substrate.

It belongs to the terpene synthase family. Tpsc subfamily. Mg(2+) is required as a cofactor. Expressed in tassels.

Its subcellular location is the plastid. The protein resides in the chloroplast. The enzyme catalyses (2E,6E,10E)-geranylgeranyl diphosphate = ent-copalyl diphosphate. Its pathway is plant hormone biosynthesis; gibberellin biosynthesis. Functionally, involved in gibberellin biosynthesis. Catalyzes the conversion of geranylgeranyl diphosphate to the gibberellin precursor ent-copalyl diphosphate (ent-CPP). Involved in the production of antifungal dolabralexin phytoalexins in response to biotic and abiotic stresses. In response to fungal infection and in associtation with KSL4, is involved in the production dolabradiene, a type of antifungal phytoalexin. The chain is Ent-copalyl diphosphate synthase 2, chloroplastic from Zea mays (Maize).